We begin with the raw amino-acid sequence, 302 residues long: Sulfate adenylyltransferase subunit 2 (302 aa).

Residues 280 to 302 are disordered; the sequence is RQGRLIDSDQSASMEQKKRQGYF.

This sequence belongs to the PAPS reductase family. CysD subfamily. In terms of assembly, heterodimer composed of CysD, the smaller subunit, and CysN.

It catalyses the reaction sulfate + ATP + H(+) = adenosine 5'-phosphosulfate + diphosphate. The protein operates within sulfur metabolism; hydrogen sulfide biosynthesis; sulfite from sulfate: step 1/3. In terms of biological role, with CysN forms the ATP sulfurylase (ATPS) that catalyzes the adenylation of sulfate producing adenosine 5'-phosphosulfate (APS) and diphosphate, the first enzymatic step in sulfur assimilation pathway. APS synthesis involves the formation of a high-energy phosphoric-sulfuric acid anhydride bond driven by GTP hydrolysis by CysN coupled to ATP hydrolysis by CysD. The protein is Sulfate adenylyltransferase subunit 2 of Shewanella sp. (strain ANA-3).